Reading from the N-terminus, the 274-residue chain is Undecaprenyl-diphosphatase (274 aa).

6 consecutive transmembrane segments (helical) span residues A44–W64, L85–I105, L109–A129, A185–L205, V214–C234, and F247–T267.

This sequence belongs to the UppP family.

The protein localises to the cell inner membrane. It catalyses the reaction di-trans,octa-cis-undecaprenyl diphosphate + H2O = di-trans,octa-cis-undecaprenyl phosphate + phosphate + H(+). Catalyzes the dephosphorylation of undecaprenyl diphosphate (UPP). Confers resistance to bacitracin. This is Undecaprenyl-diphosphatase from Variovorax paradoxus (strain S110).